Consider the following 193-residue polypeptide: Putative nucleotidase YqfW (193 aa).

It belongs to the 5'(3')-deoxyribonucleotidase family.

This is Putative nucleotidase YqfW (yqfW) from Bacillus subtilis (strain 168).